A 111-amino-acid polypeptide reads, in one-letter code: Wound-induced proteinase inhibitor 1 (111 aa).

The N-terminal stretch at 1-23 is a signal peptide; it reads MEAKFAHIILFFLLAFSFETLMA. Positions 24–36 are excised as a propeptide; sequence RKESDGPEVIKLL.

Belongs to the protease inhibitor I13 (potato type I serine protease inhibitor) family.

It localises to the secreted. This is Wound-induced proteinase inhibitor 1 from Solanum peruvianum (Peruvian tomato).